We begin with the raw amino-acid sequence, 495 residues long: MDAMDLTVAKFKEFTQLQSSAILLTVVSGIIVIVILLLRSKRRSSLKLPPGKLGLPLIGESLSFLWALRSNTLEQFVDKRVKKYGNVFKTSLLGQPTVVLCGAAGNRLILSNQEKLLSRTVSDRVAKLTGDTSISVIAGDSHRIIRAAVAGFLGPAGLKIHIGEMSAHIRNHINQVWKGKDEVNVLSLARELVFAISASLFLNINDREEQHQLHKTLETILPGYFSVPINFPGFAFRKALEGNSKRRKHFSVLQEKRRRDLSVGLASRTQDLLSVLLAYEDDKGNPLTDEEVLDNISALIDGSYESTSSQMAMLLKLLSDHPECYEKVVQEQLEIASHKKEGEEITWKDVKAMRYTWQVMQETLRMFAPVFGPRGKAITDIHYDGYTIPKGWQLSWATYSTHQNDTYFNEPDKFMPSRFDEEGGRLAPYTFVPFGGGRRKCPGWEFAKTEILLFVHHFVKTFSAYTPIDPHESIWGRPLPPVPANGFPIKLISRS.

Residues 17–37 traverse the membrane as a helical segment; sequence LQSSAILLTVVSGIIVIVILL. A heme-binding site is contributed by C441.

Belongs to the cytochrome P450 family.

The protein localises to the microsome membrane. The catalysed reaction is taxusin + reduced [NADPH--hemoprotein reductase] + O2 = 2alpha-hydroxytaxusin + oxidized [NADPH--hemoprotein reductase] + H2O + H(+). It catalyses the reaction 7beta-hydroxytaxusin + reduced [NADPH--hemoprotein reductase] + O2 = 2alpha,7beta-dihydroxytaxusin + oxidized [NADPH--hemoprotein reductase] + H2O + H(+). Its pathway is alkaloid biosynthesis; taxol biosynthesis. Catalyzes the conversion of taxusin to 2-alpha-hydroxytaxusin in taxol biosynthesis. Catalyzes the conversion of 7-beta-hydroxytaxusin to 2-alpha-7-beta-hydroxytaxusin in taxol biosynthesis. The chain is Taxoid 2-alpha-hydroxylase from Taxus canadensis (Canadian yew).